Here is an 82-residue protein sequence, read N- to C-terminus: Exodeoxyribonuclease 7 small subunit (82 aa).

Belongs to the XseB family. As to quaternary structure, heterooligomer composed of large and small subunits.

Its subcellular location is the cytoplasm. The catalysed reaction is Exonucleolytic cleavage in either 5'- to 3'- or 3'- to 5'-direction to yield nucleoside 5'-phosphates.. In terms of biological role, bidirectionally degrades single-stranded DNA into large acid-insoluble oligonucleotides, which are then degraded further into small acid-soluble oligonucleotides. The polypeptide is Exodeoxyribonuclease 7 small subunit (Mycobacterium marinum (strain ATCC BAA-535 / M)).